We begin with the raw amino-acid sequence, 458 residues long: Phosphoglucosamine mutase (458 aa).

Ser-106 serves as the catalytic Phosphoserine intermediate. Residues Ser-106, Asp-247, Asp-249, and Asp-251 each coordinate Mg(2+). Phosphoserine is present on Ser-106.

The protein belongs to the phosphohexose mutase family. Mg(2+) serves as cofactor. Activated by phosphorylation.

It catalyses the reaction alpha-D-glucosamine 1-phosphate = D-glucosamine 6-phosphate. In terms of biological role, catalyzes the conversion of glucosamine-6-phosphate to glucosamine-1-phosphate. The polypeptide is Phosphoglucosamine mutase (Chlamydia trachomatis serovar D (strain ATCC VR-885 / DSM 19411 / UW-3/Cx)).